The chain runs to 346 residues: Phenylalanine--tRNA ligase alpha subunit (346 aa).

Glu-262 contributes to the Mg(2+) binding site.

Belongs to the class-II aminoacyl-tRNA synthetase family. Phe-tRNA synthetase alpha subunit type 1 subfamily. As to quaternary structure, tetramer of two alpha and two beta subunits. Requires Mg(2+) as cofactor.

The protein resides in the cytoplasm. The enzyme catalyses tRNA(Phe) + L-phenylalanine + ATP = L-phenylalanyl-tRNA(Phe) + AMP + diphosphate + H(+). The polypeptide is Phenylalanine--tRNA ligase alpha subunit (Ehrlichia chaffeensis (strain ATCC CRL-10679 / Arkansas)).